A 316-amino-acid chain; its full sequence is tRNA dimethylallyltransferase (316 aa).

ATP is bound at residue 23-30 (GPTASGKS). Residue 25 to 30 (TASGKS) participates in substrate binding. Positions 48–51 (DSMQ) are interaction with substrate tRNA.

This sequence belongs to the IPP transferase family. In terms of assembly, monomer. Mg(2+) is required as a cofactor.

It catalyses the reaction adenosine(37) in tRNA + dimethylallyl diphosphate = N(6)-dimethylallyladenosine(37) in tRNA + diphosphate. Its function is as follows. Catalyzes the transfer of a dimethylallyl group onto the adenine at position 37 in tRNAs that read codons beginning with uridine, leading to the formation of N6-(dimethylallyl)adenosine (i(6)A). This is tRNA dimethylallyltransferase from Rhodopseudomonas palustris (strain BisB18).